The chain runs to 375 residues: tRNA-specific 2-thiouridylase MnmA (375 aa).

ATP contacts are provided by residues 13–20 (AMSGGVDS) and Met-39. Cys-111 acts as the Nucleophile in catalysis. A disulfide bond links Cys-111 and Cys-208. Gly-135 contacts ATP. Positions 158–160 (KDQ) are interaction with tRNA. Cys-208 (cysteine persulfide intermediate) is an active-site residue. An interaction with tRNA region spans residues 313–314 (RY).

This sequence belongs to the MnmA/TRMU family.

The protein resides in the cytoplasm. It catalyses the reaction S-sulfanyl-L-cysteinyl-[protein] + uridine(34) in tRNA + AH2 + ATP = 2-thiouridine(34) in tRNA + L-cysteinyl-[protein] + A + AMP + diphosphate + H(+). Functionally, catalyzes the 2-thiolation of uridine at the wobble position (U34) of tRNA, leading to the formation of s(2)U34. The chain is tRNA-specific 2-thiouridylase MnmA from Geotalea uraniireducens (strain Rf4) (Geobacter uraniireducens).